We begin with the raw amino-acid sequence, 485 residues long: Glutamyl-tRNA(Gln) amidotransferase subunit A (485 aa).

Active-site charge relay system residues include lysine 78 and serine 153. The active-site Acyl-ester intermediate is the serine 177.

The protein belongs to the amidase family. GatA subfamily. As to quaternary structure, heterotrimer of A, B and C subunits.

The enzyme catalyses L-glutamyl-tRNA(Gln) + L-glutamine + ATP + H2O = L-glutaminyl-tRNA(Gln) + L-glutamate + ADP + phosphate + H(+). Allows the formation of correctly charged Gln-tRNA(Gln) through the transamidation of misacylated Glu-tRNA(Gln) in organisms which lack glutaminyl-tRNA synthetase. The reaction takes place in the presence of glutamine and ATP through an activated gamma-phospho-Glu-tRNA(Gln). The chain is Glutamyl-tRNA(Gln) amidotransferase subunit A from Bacillus cereus (strain ATCC 14579 / DSM 31 / CCUG 7414 / JCM 2152 / NBRC 15305 / NCIMB 9373 / NCTC 2599 / NRRL B-3711).